Reading from the N-terminus, the 302-residue chain is uncharacterized protein (302 aa).

One can recognise an HTH lysR-type domain in the interval methionine 1–threonine 60. Positions phenylalanine 20–threonine 40 form a DNA-binding region, H-T-H motif.

Belongs to the LysR transcriptional regulatory family.

This is an uncharacterized protein from Escherichia coli (strain K12).